Consider the following 220-residue polypeptide: Splicing factor U2AF 26 kDa subunit (220 aa).

A2 is subject to N-acetylalanine. Residues 12–40 (EKDKVNCSFYFKIGACRHGDRCSRLHNKP) form a C3H1-type 1 zinc finger. Residues 65-147 (SHCHVSDVEV…QAVHAELSPV (83 aa)) enclose the RRM domain. The C3H1-type 2 zinc finger occupies 149–176 (DFRESCCRQYEMGECTRGGFCNFMHLRP). Positions 186-220 (YGRGPRRRSPPRSHTGHRPRERNRRRSPDHRHGRF) are disordered. Over residues 189-220 (GPRRRSPPRSHTGHRPRERNRRRSPDHRHGRF) the composition is skewed to basic residues.

The protein belongs to the splicing factor SR family. In terms of assembly, interacts with GFI1, U2AF2 and C1QBP.

The protein localises to the nucleus. It is found in the nucleus speckle. The protein resides in the cytoplasm. Its function is as follows. RNA-binding protein that function as a pre-mRNA splicing factor. Plays a critical role in both constitutive and enhancer-dependent splicing by mediating protein-protein interactions and protein-RNA interactions required for accurate 3'-splice site selection. Acts by enhancing the binding of U2AF2 to weak pyrimidine tracts. Also participates in the regulation of alternative pre-mRNA splicing. Activates exon 5 skipping of PTPRC during T-cell activation; an event reversed by GFI1. Binds to RNA at the AG dinucleotide at the 3'-splice site. Shows a preference for AGC or AGA. This chain is Splicing factor U2AF 26 kDa subunit (U2AF1L4), found in Bos taurus (Bovine).